Here is a 475-residue protein sequence, read N- to C-terminus: NADH-quinone oxidoreductase subunit N (475 aa).

The next 14 membrane-spanning stretches (helical) occupy residues 5–25 (LALP…FGVV), 32–52 (FLSC…LVVM), 71–91 (FMKI…VGYA), 99–119 (FEFP…ASSE), 121–141 (LMTL…LCAF), 155–175 (YFVL…LVYG), 193–213 (STAV…GLTF), 232–252 (PTSV…ALLL), 266–286 (WQIL…LAAI), 294–314 (LMAY…CAGT), 322–342 (LVYL…IIAM), 366–386 (ATAM…AGFF), 389–409 (MMVF…IGVV), and 439–459 (LSLS…LLVL).

It belongs to the complex I subunit 2 family. As to quaternary structure, NDH-1 is composed of 14 different subunits. Subunits NuoA, H, J, K, L, M, N constitute the membrane sector of the complex.

It localises to the cell inner membrane. The catalysed reaction is a quinone + NADH + 5 H(+)(in) = a quinol + NAD(+) + 4 H(+)(out). Its function is as follows. NDH-1 shuttles electrons from NADH, via FMN and iron-sulfur (Fe-S) centers, to quinones in the respiratory chain. The immediate electron acceptor for the enzyme in this species is believed to be ubiquinone. Couples the redox reaction to proton translocation (for every two electrons transferred, four hydrogen ions are translocated across the cytoplasmic membrane), and thus conserves the redox energy in a proton gradient. The chain is NADH-quinone oxidoreductase subunit N from Gluconacetobacter diazotrophicus (strain ATCC 49037 / DSM 5601 / CCUG 37298 / CIP 103539 / LMG 7603 / PAl5).